Here is a 273-residue protein sequence, read N- to C-terminus: Phosphatidylglycerol--prolipoprotein diacylglyceryl transferase (273 aa).

3 consecutive transmembrane segments (helical) span residues 20–40 (LAVRWYALAYMVSFIIALPIA), 59–79 (FLFYAILGVLLGGRLGYVLFY), and 97–117 (GGMSFHGGALGVILALAYFSW). R142 contacts a 1,2-diacyl-sn-glycero-3-phospho-(1'-sn-glycerol). 2 helical membrane passes run 206-226 (FGFLSGLFLFGYACARSFCEF) and 243-263 (MGQLLCIPMALAGMGLMVYAM).

Belongs to the Lgt family.

The protein localises to the cell inner membrane. The enzyme catalyses L-cysteinyl-[prolipoprotein] + a 1,2-diacyl-sn-glycero-3-phospho-(1'-sn-glycerol) = an S-1,2-diacyl-sn-glyceryl-L-cysteinyl-[prolipoprotein] + sn-glycerol 1-phosphate + H(+). Its pathway is protein modification; lipoprotein biosynthesis (diacylglyceryl transfer). Catalyzes the transfer of the diacylglyceryl group from phosphatidylglycerol to the sulfhydryl group of the N-terminal cysteine of a prolipoprotein, the first step in the formation of mature lipoproteins. This is Phosphatidylglycerol--prolipoprotein diacylglyceryl transferase from Gluconobacter oxydans (strain 621H) (Gluconobacter suboxydans).